A 196-amino-acid chain; its full sequence is Small nuclear ribonucleoprotein-associated protein B (196 aa).

The Sm domain occupies 7 to 101 (AHSSRLANLI…ILSTVVEDKP (95 aa)). Residues 105–132 (KKERLVRDKKEKKQAQKQTKLRKEKEKK) carry the Nuclear localization signal motif. A compositionally biased stretch (basic and acidic residues) spans 108 to 118 (RLVRDKKEKKQ). The segment at 108–196 (RLVRDKKEKK…FQPPPGFKRK (89 aa)) is disordered. Residues 140–181 (NTANAKHTSSNSREIAQPSSSRYNGGNDNIGANRSRFNNEAP) show a composition bias toward polar residues.

The protein belongs to the snRNP SmB/SmN family. In terms of assembly, component of the Sm core complex, present in spliceosomal snRNP U1, U2, U4/U6 and U5. The core complex contains SMB1, SMD1, SMD2, SMD3, SME1, SMX3 and SMX2 (Sm proteins B, D1, D2, D3, E, F and G, respectively), and is probably a heptameric ring structure. SMB1 specifically interacts with SMD3. Belongs to the CWC complex (or CEF1-associated complex), a spliceosome sub-complex reminiscent of a late-stage spliceosome composed of the U2, U5 and U6 snRNAs and at least BUD13, BUD31, BRR2, CDC40, CEF1, CLF1, CUS1, CWC2, CWC15, CWC21, CWC22, CWC23, CWC24, CWC25, CWC27, ECM2, HSH155, IST3, ISY1, LEA1, MSL1, NTC20, PRP8, PRP9, PRP11, PRP19, PRP21, PRP22, PRP45, PRP46, SLU7, SMB1, SMD1, SMD2, SMD3, SMX2, SMX3, SNT309, SNU114, SPP2, SYF1, SYF2, RSE1 and YJU2. Component of the U4/U6-U5 tri-snRNP complex composed of the U4, U6 and U5 snRNAs and at least PRP3, PRP4, PRP6, PRP8, PRP18, PRP38, SNU13, SNU23, SNU66, SNU114, SPP381, SMB1, SMD1, SMD2, SMD3, SMX2, SMX3, LSM2, LSM3, LSM4, LSM5, LSM6, LSM7, LSM8, BRR2 and DIB1. Interacts with the trimethylguanosine synthase TGS1.

It is found in the nucleus. The protein resides in the cytoplasm. In terms of biological role, plays a role in pre-mRNA splicing as a core component of the spliceosomal U1, U2, U4 and U5 small nuclear ribonucleoproteins (snRNPs), the building blocks of the spliceosome. This chain is Small nuclear ribonucleoprotein-associated protein B (SMB1), found in Saccharomyces cerevisiae (strain ATCC 204508 / S288c) (Baker's yeast).